The chain runs to 535 residues: EGF domain-specific O-linked N-acetylglucosamine transferase (535 aa).

An N-terminal signal peptide occupies residues 1-16 (MFILLMFVLLLQEILA). N-linked (GlcNAc...) asparagine glycans are attached at residues Asn22 and Asn271. Positions 303 to 305 (DYD) match the Required for optimal activity motif. N-linked (GlcNAc...) asparagine glycosylation is found at Asn362 and Asn501.

Belongs to the glycosyltransferase 61 family.

The protein resides in the endoplasmic reticulum lumen. The catalysed reaction is L-seryl-[protein] + UDP-N-acetyl-alpha-D-glucosamine = 3-O-(N-acetyl-beta-D-glucosaminyl)-L-seryl-[protein] + UDP + H(+). The enzyme catalyses L-threonyl-[protein] + UDP-N-acetyl-alpha-D-glucosamine = 3-O-(N-acetyl-beta-D-glucosaminyl)-L-threonyl-[protein] + UDP + H(+). Functionally, catalyzes the transfer of a single N-acetylglucosamine from UDP-GlcNAc to a serine or threonine residue in extracellular proteins resulting in their modification with a beta-linked N-acetylglucosamine (O-GlcNAc). Specifically glycosylates the Thr residue located between the fifth and sixth conserved cysteines of folded EGF-like domains. The polypeptide is EGF domain-specific O-linked N-acetylglucosamine transferase (EOGT) (Gallus gallus (Chicken)).